The primary structure comprises 2434 residues: Protein Ycf2 (2434 aa).

An ATP-binding site is contributed by 1693-1700 (GPTETGRS).

This sequence belongs to the Ycf2 family.

The protein resides in the plastid. The protein localises to the chloroplast stroma. Functionally, probable ATPase of unknown function. Its presence in a non-photosynthetic plant (Epifagus virginiana) and experiments in tobacco indicate that it has an essential function which is probably not related to photosynthesis. This Cycas taitungensis (Prince sago) protein is Protein Ycf2.